The chain runs to 681 residues: Glycogen-binding subunit 76A (681 aa).

Disordered stretches follow at residues 1-20 (MNDP…SRPP), 53-94 (LGSQ…DLQP), 232-251 (SLTE…NGHL), 285-391 (FADR…ASNL), and 405-435 (QDAT…CRPQ). The span at 59–69 (EEGEGNAEDEP) shows a compositional bias: acidic residues. Over residues 72-91 (NGTSTNTWVNSHDSEQTVTD) the composition is skewed to polar residues. 3 stretches are compositionally biased toward basic and acidic residues: residues 237–251 (EQTK…NGHL), 297–308 (RVQKESSQERVP), and 321–336 (PSDR…RVQE). Residues 353-364 (TESISTEVTTLE) show a composition bias toward polar residues. Over residues 365-374 (RSPEESRNDE) the composition is skewed to basic and acidic residues. A CBM21 domain is found at 525–632 (AVREKQVSLE…NNYGANYCFQ (108 aa)). Phosphothreonine is present on Thr545. A phosphoserine mark is found at Ser547 and Ser549.

This is Glycogen-binding subunit 76A (Gbs-76A) from Drosophila melanogaster (Fruit fly).